The sequence spans 491 residues: Argininosuccinate lyase (491 aa).

The protein belongs to the lyase 1 family. Argininosuccinate lyase subfamily.

It is found in the cytoplasm. The enzyme catalyses 2-(N(omega)-L-arginino)succinate = fumarate + L-arginine. Its pathway is amino-acid biosynthesis; L-arginine biosynthesis; L-arginine from L-ornithine and carbamoyl phosphate: step 3/3. The chain is Argininosuccinate lyase from Methanosarcina barkeri (strain Fusaro / DSM 804).